A 675-amino-acid polypeptide reads, in one-letter code: MHHVNKYFNQTMVIEALKMSFYKLNPKQLIKNPIMFVVEVGMVLTLILICFPDIFGTSYLSRGYLITIFIILLITILFANFSEAFAEGRGKAQADSLRQAQSNLTARLIEENGAYRIVNATELKAGQNIRVENGETIPADGVVINGLATVDESAITGESAPVIKESGGDFDGVIGGTLVTSDWLEIRVESEAGTSFLDKMIALVEGAERNKTPNEIALFTLLTTLTIIFLVVIVTLYPIASYLHLILPIAMLIALTVCLIPTTIGGLLSAIGIAGMDRVTQFNVLAKSGRAVEVCGDVDVMILDKTGTITYGNRIASEFLPVNQQMLEKLIVAAYMSSIYDDTPEGKSIVRLAKQMYINELPKDIDGTYKPFTAETRMSGIITNEISVFKGAPNSMINLVKQQQGNIPLNIESLCMDVSSKGGTPLIVIENNVMLGVIYLKDVIKDGLVERFTELRKMGIETVMCTGDNALTAATIAKEAGVDRFVAECKPEDKIKVIKDEQAKGHIVAMTGDGTNDAPALAQANIGLAMNSGTISAKEAANLIDLDSNPTKLIEVVKIGKQLLMTRGALTTFSLANDVAKYFAILPALMMSTIPEMTSLNIMHLSSPKSAIISALIFNALIIVALIPIAMKGVKVKGYSIDRIFINNMLIYGLGGLIVPFLGIKLIDMIVQFFV.

4 consecutive transmembrane segments (helical) span residues 34–54, 65–85, 216–236, and 245–265; these read IMFVVEVGMVLTLILICFPDI, LITIFIILLITILFANFSEAF, IALFTLLTTLTIIFLVVIVTL, and LILPIAMLIALTVCLIPTTIG. D304 acts as the 4-aspartylphosphate intermediate in catalysis. Residues D341, E345, 372 to 379, and K390 contribute to the ATP site; that span reads FTAETRMS. Residues D513 and D517 each coordinate Mg(2+). A run of 3 helical transmembrane segments spans residues 569–591, 611–631, and 644–664; these read ALTTFSLANDVAKYFAILPALMM, AIISALIFNALIIVALIPIAM, and IFINNMLIYGLGGLIVPFLGI.

This sequence belongs to the cation transport ATPase (P-type) (TC 3.A.3) family. Type IA subfamily. In terms of assembly, the system is composed of three essential subunits: KdpA, KdpB and KdpC.

It is found in the cell membrane. The enzyme catalyses K(+)(out) + ATP + H2O = K(+)(in) + ADP + phosphate + H(+). Functionally, part of the high-affinity ATP-driven potassium transport (or Kdp) system, which catalyzes the hydrolysis of ATP coupled with the electrogenic transport of potassium into the cytoplasm. This subunit is responsible for energy coupling to the transport system and for the release of the potassium ions to the cytoplasm. The protein is Potassium-transporting ATPase ATP-binding subunit 2 of Staphylococcus aureus (strain Mu50 / ATCC 700699).